Here is a 991-residue protein sequence, read N- to C-terminus: Regulator of telomere elongation helicase 1 homolog (991 aa).

The Helicase ATP-binding domain occupies 7–319 (NGIPVNFPFE…DDLVLLKEIL (313 aa)). 42 to 49 (SPTGTGKT) contacts ATP. Cysteine 148, cysteine 166, cysteine 175, and cysteine 211 together coordinate [4Fe-4S] cluster. The short motif at 254 to 257 (DEAH) is the DEAH box element. The tract at residues 812–833 (SMKVNPHSRSTKSAGDDAEAGG) is disordered.

Belongs to the helicase family. RAD3/XPD subfamily.

It is found in the nucleus. The catalysed reaction is ATP + H2O = ADP + phosphate + H(+). Its function is as follows. A probable ATP-dependent DNA helicase implicated in DNA repair and the maintenance of genomic stability. Acts as an anti-recombinase to counteract toxic recombination and limit crossover during meiosis. Regulates meiotic recombination and crossover homeostasis by physically dissociating strand invasion events and thereby promotes noncrossover repair by meiotic synthesis dependent strand annealing (SDSA) as well as disassembly of D loop recombination intermediates. The protein is Regulator of telomere elongation helicase 1 homolog of Anopheles gambiae (African malaria mosquito).